We begin with the raw amino-acid sequence, 236 residues long: Ubiquinone biosynthesis O-methyltransferase (236 aa).

The S-adenosyl-L-methionine site is built by Arg-39, Gly-59, Asp-80, and Met-124.

It belongs to the methyltransferase superfamily. UbiG/COQ3 family.

It carries out the reaction a 3-demethylubiquinol + S-adenosyl-L-methionine = a ubiquinol + S-adenosyl-L-homocysteine + H(+). It catalyses the reaction a 3-(all-trans-polyprenyl)benzene-1,2-diol + S-adenosyl-L-methionine = a 2-methoxy-6-(all-trans-polyprenyl)phenol + S-adenosyl-L-homocysteine + H(+). Its pathway is cofactor biosynthesis; ubiquinone biosynthesis. Functionally, O-methyltransferase that catalyzes the 2 O-methylation steps in the ubiquinone biosynthetic pathway. This chain is Ubiquinone biosynthesis O-methyltransferase, found in Shewanella pealeana (strain ATCC 700345 / ANG-SQ1).